Reading from the N-terminus, the 302-residue chain is Glycine--tRNA ligase alpha subunit (302 aa).

Belongs to the class-II aminoacyl-tRNA synthetase family. In terms of assembly, tetramer of two alpha and two beta subunits.

It is found in the cytoplasm. The enzyme catalyses tRNA(Gly) + glycine + ATP = glycyl-tRNA(Gly) + AMP + diphosphate. The chain is Glycine--tRNA ligase alpha subunit from Xanthomonas oryzae pv. oryzae (strain PXO99A).